We begin with the raw amino-acid sequence, 339 residues long: D-erythrose-4-phosphate dehydrogenase (339 aa).

NAD(+) contacts are provided by residues 12–13 and R81; that span reads RI. Residues 154–156, R200, 213–214, and R236 contribute to the substrate site; these read SCT and TR. The Nucleophile role is filled by C155. Residue N318 participates in NAD(+) binding.

It belongs to the glyceraldehyde-3-phosphate dehydrogenase family. Epd subfamily. In terms of assembly, homotetramer.

The protein resides in the cytoplasm. The catalysed reaction is D-erythrose 4-phosphate + NAD(+) + H2O = 4-phospho-D-erythronate + NADH + 2 H(+). Its pathway is cofactor biosynthesis; pyridoxine 5'-phosphate biosynthesis; pyridoxine 5'-phosphate from D-erythrose 4-phosphate: step 1/5. In terms of biological role, catalyzes the NAD-dependent conversion of D-erythrose 4-phosphate to 4-phosphoerythronate. This is D-erythrose-4-phosphate dehydrogenase from Cronobacter sakazakii (strain ATCC BAA-894) (Enterobacter sakazakii).